The sequence spans 183 residues: Probable transcription termination protein NusA (183 aa).

The KH domain occupies 32 to 98 (DERVAFIVKE…DDVWVKRVGK (67 aa)). Positions 149 to 183 (RKRAKRPVVKDQQQEQTETKQETDVQQDVKETVKE) are disordered. Residues 156–183 (VVKDQQQEQTETKQETDVQQDVKETVKE) show a composition bias toward basic and acidic residues.

It belongs to the NusA family.

It is found in the cytoplasm. In terms of biological role, participates in transcription termination. In Methanocaldococcus jannaschii (strain ATCC 43067 / DSM 2661 / JAL-1 / JCM 10045 / NBRC 100440) (Methanococcus jannaschii), this protein is Probable transcription termination protein NusA.